The sequence spans 471 residues: Elongation factor 1-alpha (471 aa).

The 230-residue stretch at 10 to 239 (KPRLNACFIG…EALNYQDVPE (230 aa)) folds into the tr-type G domain. The interval 19-26 (GHVDSGKS) is G1. 19–26 (GHVDSGKS) provides a ligand contact to GTP. A G2 region spans residues 75 to 79 (GITIT). Positions 96–99 (DCPG) are G3. GTP contacts are provided by residues 96 to 100 (DCPGH) and 156 to 159 (NKMD). Residues 156-159 (NKMD) form a G4 region. Residues 196 to 198 (SAF) form a G5 region.

The protein belongs to the TRAFAC class translation factor GTPase superfamily. Classic translation factor GTPase family. EF-Tu/EF-1A subfamily. As to quaternary structure, component of the eukaryotic elongation factor 1 complex (eEF1).

The protein resides in the cytoplasm. It functions in the pathway protein biosynthesis; polypeptide chain elongation. Its function is as follows. GTP-binding component of the eukaryotic elongation factor 1 complex (eEF1). In its active GTP-bound form, binds to and delivers aminoacyl-tRNA to the A-site of ribosomes during protein biosynthesis. In the presence of a correct codon-anticodon match between the aminoacyl-tRNA and the A-site codon of the ribosome-bound mRNA, the ribosome acts as a GTPase activator and the GTP is hydrolyzed. The inactive GDP-bound form leaves the ribosome and must be recycled by its guanine nucleotide exchange factor (GEF) (eEF1B subcomplex) before binding another molecule of aminoacyl-tRNA. Required for nuclear export of aminoacyl-tRNAs. May also be involved in translational quality control by targeting cotranslationally damaged proteins to the proteasome. The chain is Elongation factor 1-alpha (TEF1) from Encephalitozoon cuniculi (strain GB-M1) (Microsporidian parasite).